Reading from the N-terminus, the 571-residue chain is Proline--tRNA ligase (571 aa).

The protein belongs to the class-II aminoacyl-tRNA synthetase family. ProS type 1 subfamily. In terms of assembly, homodimer.

Its subcellular location is the cytoplasm. It catalyses the reaction tRNA(Pro) + L-proline + ATP = L-prolyl-tRNA(Pro) + AMP + diphosphate. Catalyzes the attachment of proline to tRNA(Pro) in a two-step reaction: proline is first activated by ATP to form Pro-AMP and then transferred to the acceptor end of tRNA(Pro). As ProRS can inadvertently accommodate and process non-cognate amino acids such as alanine and cysteine, to avoid such errors it has two additional distinct editing activities against alanine. One activity is designated as 'pretransfer' editing and involves the tRNA(Pro)-independent hydrolysis of activated Ala-AMP. The other activity is designated 'posttransfer' editing and involves deacylation of mischarged Ala-tRNA(Pro). The misacylated Cys-tRNA(Pro) is not edited by ProRS. The protein is Proline--tRNA ligase of Syntrophotalea carbinolica (strain DSM 2380 / NBRC 103641 / GraBd1) (Pelobacter carbinolicus).